We begin with the raw amino-acid sequence, 239 residues long: Ribonuclease 3 (239 aa).

An RNase III domain is found at 18-141 (YTTLEKALGY…LMAGVYLEAG (124 aa)). Position 54 (Glu54) interacts with Mg(2+). Asp58 is an active-site residue. Mg(2+)-binding residues include Ser127 and Glu130. Glu130 is a catalytic residue. In terms of domain architecture, DRBM spans 168–237 (DYKTALQELT…AYYALQKLKE (70 aa)).

Belongs to the ribonuclease III family. As to quaternary structure, homodimer. The cofactor is Mg(2+).

The protein resides in the cytoplasm. The catalysed reaction is Endonucleolytic cleavage to 5'-phosphomonoester.. In terms of biological role, digests double-stranded RNA. Involved in the processing of primary rRNA transcript to yield the immediate precursors to the large and small rRNAs (23S and 16S). Processes some mRNAs, and tRNAs when they are encoded in the rRNA operon. Processes pre-crRNA and tracrRNA of type II CRISPR loci if present in the organism. This Helicobacter pylori (strain G27) protein is Ribonuclease 3.